A 314-amino-acid chain; its full sequence is Pseudouridine-5'-phosphate glycosidase (314 aa).

The active-site Proton donor is glutamate 30. Lysine 91 and valine 111 together coordinate substrate. Residue aspartate 143 participates in Mn(2+) binding. 145-147 (SAD) contacts substrate. The active-site Nucleophile is lysine 164.

It belongs to the pseudouridine-5'-phosphate glycosidase family. Homotrimer. Mn(2+) serves as cofactor.

The enzyme catalyses D-ribose 5-phosphate + uracil = psi-UMP + H2O. Its function is as follows. Catalyzes the reversible cleavage of pseudouridine 5'-phosphate (PsiMP) to ribose 5-phosphate and uracil. Functions biologically in the cleavage direction, as part of a pseudouridine degradation pathway. The sequence is that of Pseudouridine-5'-phosphate glycosidase from Cupriavidus pinatubonensis (strain JMP 134 / LMG 1197) (Cupriavidus necator (strain JMP 134)).